The primary structure comprises 138 residues: Cyclin-dependent kinase 4 inhibitor B (138 aa).

The stretch at 13 to 39 is one ANK 1; truncated repeat; it reads GSDEGLASAAARGLVEKVRQLLEAGAD. ANK repeat units follow at residues 46–74, 79–108, and 112–138; these read FGRR…EPNC, TLTR…RLDV, and WGRL…ATGD.

Belongs to the CDKN2 cyclin-dependent kinase inhibitor family. In terms of assembly, heterodimer of CDKN2B with CDK4 or CDK6. Isoform 2 does not interact with CDK4 nor CDK6. In terms of tissue distribution, isoform 2 is expressed in normal (keratinocytes, fibroblasts) and tumor cell lines.

The protein resides in the cytoplasm. Functionally, interacts strongly with CDK4 and CDK6. Potent inhibitor. Potential effector of TGF-beta induced cell cycle arrest. The protein is Cyclin-dependent kinase 4 inhibitor B (CDKN2B) of Homo sapiens (Human).